The primary structure comprises 382 residues: Beta-1,4-galactosyltransferase 6 (382 aa).

Topologically, residues 1-15 are cytoplasmic; the sequence is MSALKRMMRVSNRSL. The chain crosses the membrane as a helical; Signal-anchor for type II membrane protein span at residues 16–35; the sequence is IAFIFFFSLSTSCLYFIYVA. The Lumenal portion of the chain corresponds to 36–382; sequence PGIANTYLFM…MPELAPIEDY (347 aa). Asn71, Asn75, Asn83, Asn84, Asn99, and Asn122 each carry an N-linked (GlcNAc...) asparagine glycan. Cys108 and Cys152 are disulfide-bonded. UDP-alpha-D-galactose is bound by residues 163 to 167, 202 to 204, 229 to 230, Tyr258, and Trp290; these read PFRNR, FNR, and VD. The cysteines at positions 223 and 242 are disulfide-linked. Asp230 is a binding site for Mn(2+). Residue 292-295 participates in N-acetyl-D-glucosamine binding; that stretch reads GEDD. Asn307 carries an N-linked (GlcNAc...) asparagine glycan. His323 provides a ligand contact to Mn(2+). UDP-alpha-D-galactose is bound at residue 323–324; the sequence is HH. N-acetyl-D-glucosamine is bound at residue Arg334. A glycan (N-linked (GlcNAc...) asparagine) is linked at Asn367.

This sequence belongs to the glycosyltransferase 7 family. Requires Mn(2+) as cofactor. It depends on Mg(2+) as a cofactor. Ca(2+) serves as cofactor. As to expression, brain and kidney.

The protein resides in the golgi apparatus. It localises to the golgi stack membrane. The catalysed reaction is a beta-D-glucosyl-(1&lt;-&gt;1')-N-acylsphing-4-enine + UDP-alpha-D-galactose = a beta-D-Gal-(1-&gt;4)-beta-D-Glc-(1&lt;-&gt;1)-Cer(d18:1(4E)) + UDP + H(+). The protein operates within protein modification; protein glycosylation. Its pathway is sphingolipid metabolism. Inhibited by EDTA. Functionally, catalyzes the synthesis of lactosylceramide (LacCer) via the transfer of galactose from UDP-galactose to glucosylceramide (GlcCer). LacCer is the starting point in the biosynthesis of all gangliosides (membrane-bound glycosphingolipids) which play pivotal roles in the CNS including neuronal maturation and axonal and myelin formation. This chain is Beta-1,4-galactosyltransferase 6, found in Mus musculus (Mouse).